Here is a 395-residue protein sequence, read N- to C-terminus: General transcription factor IIH subunit 2 (395 aa).

One can recognise a VWFA domain in the interval 60 to 236 (HLYVVVDGSR…HYKELLTHHV (177 aa)). The residue at position 95 (Tyr-95) is a Phosphotyrosine. The C4-type zinc-finger motif lies at 291–308 (CPQCRAKYCELPVECKIC).

This sequence belongs to the GTF2H2 family. As to quaternary structure, component of the TFIID-containing RNA polymerase II pre-initiation complex that is composed of TBP and at least GTF2A1, GTF2A2, GTF2E1, GTF2E2, GTF2F1, GTF2H2, GTF2H3, GTF2H4, GTF2H5, GTF2B, TCEA1, ERCC2 and ERCC3. Component of the 7-subunit TFIIH core complex composed of XPB/ERCC3, XPD/ERCC2, GTF2H1, GTF2H2, GTF2H3, GTF2H4 and GTF2H5, which is active in NER. The core complex associates with the 3-subunit CDK-activating kinase (CAK) module composed of CCNH/cyclin H, CDK7 and MNAT1 to form the 10-subunit holoenzyme (holo-TFIIH) active in transcription. Interacts with XPB, XPD, GTF2H1 and GTF2H3. (Microbial infection) Interacts with varicella-zoster virus IE63 protein. In terms of tissue distribution, widely expressed, with higher expression in skeletal muscle.

The protein localises to the nucleus. Functionally, component of the general transcription and DNA repair factor IIH (TFIIH) core complex, which is involved in general and transcription-coupled nucleotide excision repair (NER) of damaged DNA and, when complexed to CAK, in RNA transcription by RNA polymerase II. In NER, TFIIH acts by opening DNA around the lesion to allow the excision of the damaged oligonucleotide and its replacement by a new DNA fragment. In transcription, TFIIH has an essential role in transcription initiation. When the pre-initiation complex (PIC) has been established, TFIIH is required for promoter opening and promoter escape. Phosphorylation of the C-terminal tail (CTD) of the largest subunit of RNA polymerase II by the kinase module CAK controls the initiation of transcription. The N-terminus of GTF2H2 interacts with and regulates XPD whereas an intact C-terminus is required for a successful escape of RNAP II form the promoter. The sequence is that of General transcription factor IIH subunit 2 (GTF2H2) from Homo sapiens (Human).